Here is a 304-residue protein sequence, read N- to C-terminus: Peptidyl-prolyl cis-trans isomerase FKBP35 (304 aa).

One can recognise a PPIase FKBP-type domain in the interval 37 to 126; it reads GNEVTVHYVG…LFEIELLSFR (90 aa). TPR repeat units lie at residues 144–177, 194–227, and 228–261; these read AFDI…FIHT, ISCN…DKNN, and VKAL…NPNN.

Belongs to the FKBP-type PPIase family. In terms of assembly, homodimer. Interacts (via TPR repeats) with HSP90 (probably via MEEVD motif).

The protein resides in the cytoplasm. It is found in the nucleus. The enzyme catalyses [protein]-peptidylproline (omega=180) = [protein]-peptidylproline (omega=0). Its activity is regulated as follows. Inhibited by FK506 and its derivates, such as ascomycin, and rapamycin. FK506 and rapamycin inhibit peptidylprolyl isomerase activity but not chaperone activity. Inhibited by N-(2-ethyl-phenyl)-2-(3H-imidazao [4, 5-b] pyridin-2-yl-sulfanyl)-acetamide (D44). Not inhibited by cyclosporin A. Inhibition of calcineurin phosphatase activity is enhanced by FK506. In terms of biological role, has peptidylprolyl isomerase (PPIase) and co-chaperone activities. Assists protein folding by catalyzing the peptidyl conversion of cis and trans rotamers of the prolyl amide bond of protein substrates. Inhibits calcineurin phosphatase activity in vitro. Plays an essential role in merozoite egress from host erythrocytes. The protein is Peptidyl-prolyl cis-trans isomerase FKBP35 of Plasmodium falciparum (isolate 3D7).